We begin with the raw amino-acid sequence, 1420 residues long: DNA-directed RNA polymerase subunit beta' (1420 aa).

Zn(2+) is bound by residues cysteine 71, cysteine 73, cysteine 86, and cysteine 89. The Mg(2+) site is built by aspartate 461, aspartate 463, and aspartate 465. Positions 815, 889, 896, and 899 each coordinate Zn(2+).

It belongs to the RNA polymerase beta' chain family. As to quaternary structure, the RNAP catalytic core consists of 2 alpha, 1 beta, 1 beta' and 1 omega subunit. When a sigma factor is associated with the core the holoenzyme is formed, which can initiate transcription. Requires Mg(2+) as cofactor. The cofactor is Zn(2+).

The catalysed reaction is RNA(n) + a ribonucleoside 5'-triphosphate = RNA(n+1) + diphosphate. Functionally, DNA-dependent RNA polymerase catalyzes the transcription of DNA into RNA using the four ribonucleoside triphosphates as substrates. In Haemophilus ducreyi (strain 35000HP / ATCC 700724), this protein is DNA-directed RNA polymerase subunit beta'.